The chain runs to 392 residues: MLSIIHVGWLELVWFVALYPFACWTLFAVLKSVYRITLHPLAKFPGPKLAGASYCYEFWYEIVCGIQYTQKIIKLHEQYGPIVRINPDELHFNDIDFVDVVYTAGARKRDKSRHYLAGFEGSIIRFVSSDFHSFLIDTRVKKPERLKRVVLGAERHHDAKDCPMFLELLNSNLPAQEKSKQRLMYEANGATLAGSGSTAIALSNIVYNLVANPRIGHKLRSELMRKVSASKNLPTWSTLEELPYLTAVIHEGLRSMYDPSKERLPYDPSQERLPRVATEEELIYEGGSALGKSKYVIPRGYAISTSAHVVHSDESIFPNASQFDPERWLDRDGQRNKELERHLLSFSKGSRHCLGMHCRRATCLAIPASARNGTSGYQFTSGQLEYKVQERQ.

A helical membrane pass occupies residues 10 to 30; sequence LELVWFVALYPFACWTLFAVL. A glycan (N-linked (GlcNAc...) asparagine) is linked at Asn319. Cys353 contacts heme. The N-linked (GlcNAc...) asparagine glycan is linked to Asn372.

This sequence belongs to the cytochrome P450 family. Requires heme as cofactor.

Its subcellular location is the membrane. It functions in the pathway secondary metabolite biosynthesis. Functionally, cytochrome P450 monooxygenase; part of the gene cluster that mediates the biosynthesis of pyrrolopyrazines, secondary metabolites showing insecticidal activity. The role of ppzE within the pathway has still to be determined. The single multifunctional NRPS ppzA is sufficient to produce peramine via condensation of 1-pyrroline-5-carboxylate and arginine, N-methylation of the alpha-amino group of arginine and reduction of the thioester and the cyclization to form an iminium ion resulting in release from the peptide synthetase. Deprotonation of this intermediate and oxidation of the pyrroline ring would give rise to peramine. In Epichloe species that produce only peramine, the peramine synthetase gene is not localized in a gene cluster, in contrast to Metarhizium species that contain additional pyrrolopyrazine biosynthesis genes. The 2-oxoglutarate-Fe(II) type oxidoreductase ppzC hydroxylates peramine to yield the newly identified compound 8-hydroxyperamine whereas ppzD converts L-proline into trans-4-hydroxy-L-proline, a precursor of peramine biosynthesis. This is Cytochrome P450 monooxygenase ppzE from Metarhizium rileyi (strain RCEF 4871) (Nomuraea rileyi).